We begin with the raw amino-acid sequence, 148 residues long: Large ribosomal subunit protein uL15 (148 aa).

Over residues 1-12 (MSEPIKLHDLRP) the composition is skewed to basic and acidic residues. Positions 1-52 (MSEPIKLHDLRPAKGANKPKTRVGRGEASKGKTAGRGTKGTKARKQVSAAFE) are disordered.

The protein belongs to the universal ribosomal protein uL15 family. Part of the 50S ribosomal subunit.

In terms of biological role, binds to the 23S rRNA. This is Large ribosomal subunit protein uL15 from Corynebacterium diphtheriae (strain ATCC 700971 / NCTC 13129 / Biotype gravis).